Reading from the N-terminus, the 263-residue chain is Non-homologous end joining protein Ku 3 (263 aa).

Residues 6-169 (FGLVSVPVQL…WADEVRDPHR (164 aa)) form the Ku domain.

This sequence belongs to the prokaryotic Ku family. Homodimer. Interacts with LigD.

With LigD forms a non-homologous end joining (NHEJ) DNA repair enzyme, which repairs dsDNA breaks with reduced fidelity. Binds linear dsDNA with 5'- and 3'- overhangs but not closed circular dsDNA nor ssDNA. Recruits and stimulates the ligase activity of LigD. The sequence is that of Non-homologous end joining protein Ku 3 from Saccharopolyspora erythraea (strain ATCC 11635 / DSM 40517 / JCM 4748 / NBRC 13426 / NCIMB 8594 / NRRL 2338).